Here is a 357-residue protein sequence, read N- to C-terminus: O-methyltransferase 9 (357 aa).

S-adenosyl-L-methionine contacts are provided by Gly200, Asp224, Asn249, Phe250, and Lys263. The Proton acceptor role is filled by His267.

This sequence belongs to the class I-like SAM-binding methyltransferase superfamily. Cation-independent O-methyltransferase family. COMT subfamily.

It carries out the reaction (3,5-dichloro-2,4,6-trihydroxyphenyl)hexan-1-one + S-adenosyl-L-methionine = 1-(3,5-dichloro-2,6-dihydroxy-4-methoxyphenyl)hexan-1-one + S-adenosyl-L-homocysteine + H(+). This is O-methyltransferase 9 (omt9) from Dictyostelium discoideum (Social amoeba).